Consider the following 182-residue polypeptide: uncharacterized protein (182 aa).

Its subcellular location is the mitochondrion. This is an uncharacterized protein from Schizosaccharomyces pombe (strain 972 / ATCC 24843) (Fission yeast).